Here is a 128-residue protein sequence, read N- to C-terminus: uncharacterized protein (128 aa).

The next 3 helical transmembrane spans lie at 1-21, 51-71, and 76-96; these read MLVF…LIFL, VRVE…AILG, and ANFL…VYYV.

It is found in the membrane. This is an uncharacterized protein from Saccharomyces cerevisiae (strain ATCC 204508 / S288c) (Baker's yeast).